A 379-amino-acid polypeptide reads, in one-letter code: Odorant receptor 33b (379 aa).

Residues Met-1 to Asp-37 lie on the Cytoplasmic side of the membrane. Residues Leu-38–Met-58 traverse the membrane as a helical segment. At Glu-59–Asp-64 the chain is on the extracellular side. The chain crosses the membrane as a helical span at residues Val-65 to Phe-85. The Cytoplasmic segment spans residues Arg-86–Ser-129. A helical transmembrane segment spans residues Phe-130–Gly-150. The Extracellular segment spans residues His-151–Ala-165. Residues Thr-166–Leu-186 traverse the membrane as a helical segment. The Cytoplasmic portion of the chain corresponds to Gln-187–Gln-256. A helical membrane pass occupies residues Leu-257–Phe-277. Topologically, residues Ala-278–Asn-281 are extracellular. Residues Phe-282–Cys-302 form a helical membrane-spanning segment. At Tyr-303–Gly-355 the chain is on the cytoplasmic side. A helical membrane pass occupies residues Ile-356–Met-376. The Extracellular portion of the chain corresponds to Ser-377 to Arg-379.

It belongs to the insect chemoreceptor superfamily. Heteromeric odorant receptor channel (TC 1.A.69) family. Or2a subfamily. Interacts with Orco. Complexes exist early in the endomembrane system in olfactory sensory neurons (OSNs), coupling these complexes to the conserved ciliary trafficking pathway. As to expression, expressed in 15 cells in the antenna but not the maxillary palp.

The protein localises to the cell membrane. Functionally, odorant receptor which mediates acceptance or avoidance behavior, depending on its substrates. The odorant receptor repertoire encodes a large collection of odor stimuli that vary widely in identity, intensity, and duration. May form a complex with Orco to form odorant-sensing units, providing sensitive and prolonged odorant signaling and calcium permeability. Involved in the behavioral responses to pentyl acetate and pyrazines. The chain is Odorant receptor 33b (Or33b) from Drosophila melanogaster (Fruit fly).